The chain runs to 289 residues: MLVHPQIDPIAIQLGPLAVRWYGLMYLLGFACFILLGRYRIKRNPEGAFTISMLDDMLFYGVLGVIVGGRLGHIFFYQFGYYLEHPLEIFAVWQGGMSFHGGFLGVIAAMALLARKYHLRWLVVTDFIAPLVPLGLGAGRIGNFINAELWGRPTDVPWGMIFPYVDNIPRHPSQLYEFALEGLAFFTLMWIYSARPRPVGAVSGMFLIGYGVFRSFAEFFREPDEGFMGMMTLGISMGQWLSLPMILAGVIMLVWAYRTQAPVSARGKAGKAGKAANAVVAGKRGSKER.

Helical transmembrane passes span 17 to 37, 57 to 77, 89 to 109, 121 to 141, 174 to 194, 200 to 220, and 235 to 255; these read LAVR…ILLG, MLFY…IFFY, IFAV…VIAA, WLVV…AGRI, QLYE…IYSA, GAVS…AEFF, and ISMG…MLVW. Position 140 (arginine 140) interacts with a 1,2-diacyl-sn-glycero-3-phospho-(1'-sn-glycerol).

This sequence belongs to the Lgt family.

It localises to the cell inner membrane. It carries out the reaction L-cysteinyl-[prolipoprotein] + a 1,2-diacyl-sn-glycero-3-phospho-(1'-sn-glycerol) = an S-1,2-diacyl-sn-glyceryl-L-cysteinyl-[prolipoprotein] + sn-glycerol 1-phosphate + H(+). The protein operates within protein modification; lipoprotein biosynthesis (diacylglyceryl transfer). Its function is as follows. Catalyzes the transfer of the diacylglyceryl group from phosphatidylglycerol to the sulfhydryl group of the N-terminal cysteine of a prolipoprotein, the first step in the formation of mature lipoproteins. The chain is Phosphatidylglycerol--prolipoprotein diacylglyceryl transferase from Nitrosospira multiformis (strain ATCC 25196 / NCIMB 11849 / C 71).